Reading from the N-terminus, the 598-residue chain is Probable translation initiation factor IF-2 (598 aa).

A tr-type G domain is found at 3–225 (LRCPIVSVLG…GLAQRFLEQK (223 aa)). The segment at 12–19 (GHVDHGKT) is G1. Residue 12 to 19 (GHVDHGKT) coordinates GTP. A G2 region spans residues 37-41 (GITQH). The segment at 76 to 79 (DTPG) is G3. GTP-binding positions include 76 to 80 (DTPGH) and 130 to 133 (NKVD). The segment at 130–133 (NKVD) is G4. The tract at residues 200–202 (SAM) is G5.

Belongs to the TRAFAC class translation factor GTPase superfamily. Classic translation factor GTPase family. IF-2 subfamily.

Its function is as follows. Function in general translation initiation by promoting the binding of the formylmethionine-tRNA to ribosomes. Seems to function along with eIF-2. The chain is Probable translation initiation factor IF-2 from Methanococcus maripaludis (strain DSM 14266 / JCM 13030 / NBRC 101832 / S2 / LL).